The sequence spans 312 residues: tRNA uridine(34) hydroxylase (312 aa).

One can recognise a Rhodanese domain in the interval 124–218 (SDPEVLLIDT…YLEEVPEQES (95 aa)). Residue cysteine 178 is the Cysteine persulfide intermediate of the active site. The tract at residues 293-312 (AKARNQPHPIGRNYRLPSEA) is disordered.

This sequence belongs to the TrhO family.

The enzyme catalyses uridine(34) in tRNA + AH2 + O2 = 5-hydroxyuridine(34) in tRNA + A + H2O. Functionally, catalyzes oxygen-dependent 5-hydroxyuridine (ho5U) modification at position 34 in tRNAs. In Pseudomonas syringae pv. syringae (strain B728a), this protein is tRNA uridine(34) hydroxylase.